The sequence spans 220 residues: Large ribosomal subunit protein uL3 (220 aa).

The disordered stretch occupies residues 130-156 (AIKRHGQSRGPMSHGSHFHRAPGSVGM).

It belongs to the universal ribosomal protein uL3 family. In terms of assembly, part of the 50S ribosomal subunit. Forms a cluster with proteins L14 and L19.

In terms of biological role, one of the primary rRNA binding proteins, it binds directly near the 3'-end of the 23S rRNA, where it nucleates assembly of the 50S subunit. In Staphylococcus aureus (strain Mu3 / ATCC 700698), this protein is Large ribosomal subunit protein uL3.